Here is a 305-residue protein sequence, read N- to C-terminus: UDP-N-acetylenolpyruvoylglucosamine reductase 2 (305 aa).

In terms of domain architecture, FAD-binding PCMH-type spans 33 to 197; the sequence is VGGKADVFVA…LEARFELEEG (165 aa). The active site involves Arg-176. Ser-226 (proton donor) is an active-site residue. The active site involves Glu-296.

This sequence belongs to the MurB family. FAD serves as cofactor.

Its subcellular location is the cytoplasm. The enzyme catalyses UDP-N-acetyl-alpha-D-muramate + NADP(+) = UDP-N-acetyl-3-O-(1-carboxyvinyl)-alpha-D-glucosamine + NADPH + H(+). Its pathway is cell wall biogenesis; peptidoglycan biosynthesis. Cell wall formation. This Bacillus cereus (strain ATCC 14579 / DSM 31 / CCUG 7414 / JCM 2152 / NBRC 15305 / NCIMB 9373 / NCTC 2599 / NRRL B-3711) protein is UDP-N-acetylenolpyruvoylglucosamine reductase 2 (murB2).